The following is a 203-amino-acid chain: Thymidylate kinase (203 aa).

10–17 (GIDGAGKS) contacts ATP.

Belongs to the thymidylate kinase family.

It carries out the reaction dTMP + ATP = dTDP + ADP. Phosphorylation of dTMP to form dTDP in both de novo and salvage pathways of dTTP synthesis. The polypeptide is Thymidylate kinase (Cupriavidus taiwanensis (strain DSM 17343 / BCRC 17206 / CCUG 44338 / CIP 107171 / LMG 19424 / R1) (Ralstonia taiwanensis (strain LMG 19424))).